We begin with the raw amino-acid sequence, 292 residues long: MFARLVPRLQPQLLSKRVLTARYPMLTTTPIYHQTPMQIIKRNYVIVHRERKKEPVIRYLFYMLVASWVAIYFVANRVDKKKPPQQSFTEREFQSYEEETGLKRRNKLISHTMNSKYKFYVIPYVHDEEELKKVANLLQHKDENATVKIIDPAQLIEEQKKDEGMKYHYLLEDLDEQGRPYPPGLITAVIKQEIYKILNTREGTFDTNFIIKNYPQTTNEAIKFENDISDIQKCLILHYDMLNELPKNKTDEEQRAIKNVDGYFDSVGKSKTLVEKFDPMDKEFEEIMLEDI.

The transit peptide at 1-26 (MFARLVPRLQPQLLSKRVLTARYPML) directs the protein to the mitochondrion. The helical transmembrane segment at 56–75 (VIRYLFYMLVASWVAIYFVA) threads the bilayer.

This sequence belongs to the AIM36 family.

Its subcellular location is the mitochondrion membrane. In Candida albicans (strain SC5314 / ATCC MYA-2876) (Yeast), this protein is Altered inheritance of mitochondria protein 36, mitochondrial (AIM36).